A 187-amino-acid polypeptide reads, in one-letter code: RNA pyrophosphohydrolase (187 aa).

The region spanning 6–149 is the Nudix hydrolase domain; that stretch reads GYRANVGIIL…KRQVYRLALT (144 aa). The Nudix box signature appears at 38–59; that stretch reads GGIKSGETPTQAMYRELAEETG.

Belongs to the Nudix hydrolase family. RppH subfamily. A divalent metal cation is required as a cofactor.

Functionally, accelerates the degradation of transcripts by removing pyrophosphate from the 5'-end of triphosphorylated RNA, leading to a more labile monophosphorylated state that can stimulate subsequent ribonuclease cleavage. The polypeptide is RNA pyrophosphohydrolase (Nitrosomonas eutropha (strain DSM 101675 / C91 / Nm57)).